The primary structure comprises 398 residues: Type II secretion system protein L (398 aa).

The Cytoplasmic segment spans residues 1-248; sequence MNNHHTSSAA…RQPTPRRWRP (248 aa). The helical transmembrane segment at 249–265 threads the bilayer; the sequence is VIVAALALLLLWSSNCL. Residues 266-398 are Periplasmic-facing; sequence HDHLMLGQQA…GRLTLEGNDA (133 aa).

The protein belongs to the GSP L family. In terms of assembly, type II secretion system is composed of four main components: the outer membrane complex, the inner membrane complex, the cytoplasmic secretion ATPase and the periplasm-spanning pseudopilus. Forms homodimers. Interacts with PulM/GspM. Interacts with PulE/GspE and PulF/GspF.

The protein resides in the cell inner membrane. Its function is as follows. Inner membrane component of the type II secretion system required for the energy-dependent secretion of extracellular factors such as proteases and toxins from the periplasm. Plays a role in the complex assembly and recruits PulM resulting in a stable complex in the inner membrane. Provides thus a link between the energy-providing PulE protein in the cytoplasm and the rest of the T2SS machinery. In Klebsiella pneumoniae, this protein is Type II secretion system protein L (pulL).